We begin with the raw amino-acid sequence, 348 residues long: Mediator of RNA polymerase II transcription subunit 18 (348 aa).

A compositionally biased stretch (basic and acidic residues) spans 152–218 (MDVDLEHKDK…KNDEVKHSEV (67 aa)). Positions 152 to 227 (MDVDLEHKDK…VNLEDGAETG (76 aa)) are disordered. A coiled-coil region spans residues 167–223 (DTKEKEEDKKEEDKKEEDKKEEDKKEEDKKEEDKKEEEKVEKKNDEVKHSEVNLEDG).

The protein belongs to the Mediator complex subunit 18 family. In terms of assembly, component of the Mediator complex.

It is found in the nucleus. Its function is as follows. Component of the Mediator complex, a coactivator involved in the regulated transcription of nearly all RNA polymerase II-dependent genes. Mediator functions as a bridge to convey information from gene-specific regulatory proteins to the basal RNA polymerase II transcription machinery. Mediator is recruited to promoters by direct interactions with regulatory proteins and serves as a scaffold for the assembly of a functional preinitiation complex with RNA polymerase II and the general transcription factors. In Scheffersomyces stipitis (strain ATCC 58785 / CBS 6054 / NBRC 10063 / NRRL Y-11545) (Yeast), this protein is Mediator of RNA polymerase II transcription subunit 18 (SRB5).